Here is a 60-residue protein sequence, read N- to C-terminus: Small, acid-soluble spore protein H (60 aa).

This sequence belongs to the SspH family.

Its subcellular location is the spore core. The protein is Small, acid-soluble spore protein H of Halalkalibacterium halodurans (strain ATCC BAA-125 / DSM 18197 / FERM 7344 / JCM 9153 / C-125) (Bacillus halodurans).